We begin with the raw amino-acid sequence, 618 residues long: Glucose starvation modulator protein 1 (618 aa).

Residues 20-48 (CEFCHTKHIQCDVGRPCQNCLKRNIGKFC) constitute a DNA-binding region (zn(2)-C6 fungal-type). A disordered region spans residues 325-352 (ANANTHPSHNAKLESECDSSSHSDADLE). A compositionally biased stretch (basic and acidic residues) spans 335–352 (AKLESECDSSSHSDADLE). The 73-residue stretch at 466-538 (LLDLENMAKL…QIFNELLAFG (73 aa)) folds into the PAS domain.

This sequence belongs to the ERT1/acuK family.

The protein resides in the nucleus. Transcription factor which regulates nonfermentable carbon utilization. Binds specifically to 5'-CGGN(8)CGG-3' and 5'-CGGN(9)CGG-3' sequences in the promoter region. In Saccharomyces cerevisiae (strain YJM789) (Baker's yeast), this protein is Glucose starvation modulator protein 1 (GSM1).